The chain runs to 374 residues: MPTDYYEILGVSRDAGKEDIKRAYRRLARKYHPDVNKEPGAEEHFKEINRAYEILSEPETRNRYDRFGEAGVSGGAAGFDPDNMGGFADIFETIFSGFGGMGGQATARRRTGPTRGEDLRLDFRLKFREAVFGGEKEIRIRHLETCQTCKGSGARPGTSSRTCTTCSGTGQVRRATRTPFGTFAQVSVCPTCDGAGEVIEEKCDVCGGSGRRQETKKLKITIPAGVDNGMKLRVAREGDAGLKGGPPGDLFVYLTVETDAEFQREGNDIKSDITISYIQAILGCTIKVNTVDGQEDLTIPAGTQPNTVLILENKGVPKLGNPVSRGDHRITVKISIPTRVTGEERELLEKLAKVRGETVGKGGIEGFLGNIFHK.

Residues 4-68 (DYYEILGVSR…ETRNRYDRFG (65 aa)) enclose the J domain. The CR-type zinc-finger motif lies at 133–215 (GGEKEIRIRH…CGGSGRRQET (83 aa)). Zn(2+)-binding residues include cysteine 146, cysteine 149, cysteine 163, cysteine 166, cysteine 189, cysteine 192, cysteine 203, and cysteine 206. 4 CXXCXGXG motif repeats span residues 146-153 (CQTCKGSG), 163-170 (CTTCSGTG), 189-196 (CPTCDGAG), and 203-210 (CDVCGGSG).

This sequence belongs to the DnaJ family. Homodimer. Requires Zn(2+) as cofactor.

It localises to the cytoplasm. Participates actively in the response to hyperosmotic and heat shock by preventing the aggregation of stress-denatured proteins and by disaggregating proteins, also in an autonomous, DnaK-independent fashion. Unfolded proteins bind initially to DnaJ; upon interaction with the DnaJ-bound protein, DnaK hydrolyzes its bound ATP, resulting in the formation of a stable complex. GrpE releases ADP from DnaK; ATP binding to DnaK triggers the release of the substrate protein, thus completing the reaction cycle. Several rounds of ATP-dependent interactions between DnaJ, DnaK and GrpE are required for fully efficient folding. Also involved, together with DnaK and GrpE, in the DNA replication of plasmids through activation of initiation proteins. In Microcystis aeruginosa (strain NIES-843 / IAM M-2473), this protein is Chaperone protein DnaJ.